Consider the following 323-residue polypeptide: Phosphomevalonate kinase (323 aa).

This sequence belongs to the GHMP kinase family. Homodimer. Mg(2+) serves as cofactor.

The enzyme catalyses (R)-5-phosphomevalonate + ATP = (R)-5-diphosphomevalonate + ADP. The protein operates within isoprenoid biosynthesis; isopentenyl diphosphate biosynthesis via mevalonate pathway; isopentenyl diphosphate from (R)-mevalonate: step 2/3. Functionally, catalyzes the phosphorylation of (R)-mevalonate 5-phosphate (MVAP) to (R)-mevalonate 5-diphosphate (MVAPP). Functions in the mevalonate (MVA) pathway leading to isopentenyl diphosphate (IPP), a key precursor for the biosynthesis of isoprenoid compounds such as archaeal membrane lipids. This Saccharolobus solfataricus (strain ATCC 35092 / DSM 1617 / JCM 11322 / P2) (Sulfolobus solfataricus) protein is Phosphomevalonate kinase.